Consider the following 256-residue polypeptide: Receptor expression-enhancing protein 3 (256 aa).

3 consecutive transmembrane segments (helical) span residues 1 to 21 (MVSW…YPAY), 42 to 62 (WIVF…IAWF), and 68 to 88 (IKIA…SVIY). The disordered stretch occupies residues 177–256 (IMDQPDGAEY…NATTYSNMES (80 aa)). Over residues 247-256 (NATTYSNMES) the composition is skewed to polar residues.

The protein belongs to the DP1 family.

It localises to the endoplasmic reticulum membrane. Microtubule-binding protein required to ensure proper cell division and nuclear envelope reassembly by sequestering the endoplasmic reticulum away from chromosomes during mitosis. Probably acts by clearing the endoplasmic reticulum membrane from metaphase chromosomes. This chain is Receptor expression-enhancing protein 3 (reep3), found in Danio rerio (Zebrafish).